We begin with the raw amino-acid sequence, 106 residues long: MATAKPKKKNPRLASGRKRVRQDVKLNAANTSLRSKYRTAVKNVEKAVLAGDKDKAKDLFAKAQSIVDTISDKGIFHKNKAARDKSRLSAKVKALALKAVETPTAA.

Residues 1–20 (MATAKPKKKNPRLASGRKRV) are compositionally biased toward basic residues. The disordered stretch occupies residues 1 to 21 (MATAKPKKKNPRLASGRKRVR).

It belongs to the bacterial ribosomal protein bS20 family.

Functionally, binds directly to 16S ribosomal RNA. In Polaromonas naphthalenivorans (strain CJ2), this protein is Small ribosomal subunit protein bS20.